The primary structure comprises 152 residues: uncharacterized protein (152 aa).

A helical membrane pass occupies residues Ala-12–Phe-34.

The protein to B.subtilis YfjD.

It localises to the membrane. This is an uncharacterized protein from Bacillus subtilis (strain 168).